A 510-amino-acid polypeptide reads, in one-letter code: Amidophosphoribosyltransferase (510 aa).

C2 functions as the Nucleophile in the catalytic mechanism. The Glutamine amidotransferase type-2 domain occupies 2-239; that stretch reads CGILGIVLAN…PGEAVIIPKN (238 aa). 2 residues coordinate Mg(2+): D373 and D374.

The protein in the C-terminal section; belongs to the purine/pyrimidine phosphoribosyltransferase family. It depends on Mg(2+) as a cofactor.

It catalyses the reaction 5-phospho-beta-D-ribosylamine + L-glutamate + diphosphate = 5-phospho-alpha-D-ribose 1-diphosphate + L-glutamine + H2O. Its pathway is purine metabolism; IMP biosynthesis via de novo pathway; N(1)-(5-phospho-D-ribosyl)glycinamide from 5-phospho-alpha-D-ribose 1-diphosphate: step 1/2. In Saccharomyces cerevisiae (strain ATCC 204508 / S288c) (Baker's yeast), this protein is Amidophosphoribosyltransferase (ADE4).